Here is a 463-residue protein sequence, read N- to C-terminus: Na(+)/H(+) antiporter NhaA 3 (463 aa).

Transmembrane regions (helical) follow at residues 28–48 (FLAT…AALL), 79–99 (LHHW…GLEI), 114–134 (IAVP…IYFV), 144–164 (GWGI…ALFG), 173–193 (LFLL…VGIF), 196–216 (DHLN…ILGL), 232–252 (LVLW…GVLV), 305–325 (VLHP…NAGV), 344–364 (VAAA…VAAI), 377–397 (YGHL…SLFI), and 413–433 (IGIL…LRVL). A disordered region spans residues 444 to 463 (TDEPVPRLPPRPWRAPVPAK). A compositionally biased stretch (pro residues) spans 449-463 (PRLPPRPWRAPVPAK).

It belongs to the NhaA Na(+)/H(+) (TC 2.A.33) antiporter family.

It is found in the cell membrane. The catalysed reaction is Na(+)(in) + 2 H(+)(out) = Na(+)(out) + 2 H(+)(in). Its function is as follows. Na(+)/H(+) antiporter that extrudes sodium in exchange for external protons. The polypeptide is Na(+)/H(+) antiporter NhaA 3 (Frankia alni (strain DSM 45986 / CECT 9034 / ACN14a)).